The chain runs to 435 residues: Methylenetetrahydrofolate--tRNA-(uracil-5-)-methyltransferase TrmFO (435 aa).

Residue 10 to 15 coordinates FAD; the sequence is GAGLAG.

Belongs to the MnmG family. TrmFO subfamily. Requires FAD as cofactor.

The protein resides in the cytoplasm. It carries out the reaction uridine(54) in tRNA + (6R)-5,10-methylene-5,6,7,8-tetrahydrofolate + NADH + H(+) = 5-methyluridine(54) in tRNA + (6S)-5,6,7,8-tetrahydrofolate + NAD(+). The enzyme catalyses uridine(54) in tRNA + (6R)-5,10-methylene-5,6,7,8-tetrahydrofolate + NADPH + H(+) = 5-methyluridine(54) in tRNA + (6S)-5,6,7,8-tetrahydrofolate + NADP(+). Catalyzes the folate-dependent formation of 5-methyl-uridine at position 54 (M-5-U54) in all tRNAs. In Geotalea uraniireducens (strain Rf4) (Geobacter uraniireducens), this protein is Methylenetetrahydrofolate--tRNA-(uracil-5-)-methyltransferase TrmFO.